The primary structure comprises 146 residues: Antiholin-like protein LrgA (146 aa).

4 helical membrane passes run 7-29 (YGFL…IAAI), 34-53 (IPAS…LKVI), 65-87 (LTSL…LGVM), and 97-119 (VILL…ILSL).

Belongs to the CidA/LrgA family. LrgA subfamily.

Its subcellular location is the cell membrane. In terms of biological role, inhibits the expression or activity of extracellular murein hydrolases by interacting, possibly with LrgB, with the holin-like protein CidA. The LrgAB and CidA proteins may affect the proton motive force of the membrane. May be involved in programmed cell death (PCD), possibly triggering PCD in response to antibiotics and environmental stresses. This Bacillus subtilis (strain 168) protein is Antiholin-like protein LrgA.